An 858-amino-acid chain; its full sequence is Potassium channel KOR1 (858 aa).

A disordered region spans residues 1 to 41 (MGRGIGSKRRVEDDDGENMPGRKKKEEEEEEEDDDGEEEYE). Residues 1–102 (MGRGIGSKRR…PDNKWYRLWT (102 aa)) are Cytoplasmic-facing. Acidic residues predominate over residues 27-41 (EEEEEEDDDGEEEYE). Residues 103-123 (RFILVWAVYSSFFTPLEFGFF) traverse the membrane as a helical segment. The Extracellular segment spans residues 124 to 130 (RGLPRNL). The chain crosses the membrane as a helical span at residues 131–151 (FFLDIAGQIAFLIDIVLRFFV). Topologically, residues 152–174 (AYRDPDTYRMVHNPTSIALRYCK) are cytoplasmic. The helical transmembrane segment at 175–195 (SSFIFDLLGCFPWDAIYKACG) threads the bilayer. Residues 196-201 (SKEEVR) lie on the Extracellular side of the membrane. The helical; Voltage-sensor transmembrane segment at 202–222 (YLLWIRLTRAMKVTEFFRSME) threads the bilayer. The Cytoplasmic segment spans residues 223–236 (KDIRINYLFTRIVK). The chain crosses the membrane as a helical span at residues 237–257 (LIVVELYCTHTAACIFYYLAT). The Extracellular segment spans residues 258 to 292 (TLPESMEGYTWIGSLQLGDYSYSHFREIDLTKRYM). The segment at residues 293-312 (TSLYFAIVTMATVGYGDIHA) is an intramembrane region (pore-forming). The Extracellular portion of the chain corresponds to 313 to 316 (VNVR). The chain crosses the membrane as a helical span at residues 317 to 337 (EMIFIMIYVSFDMILGAYLIG). Over 338 to 858 (NMTALIVKGS…GDDGGTEARQ (521 aa)) the chain is Cytoplasmic. 419 to 539 (LFKGCSAEFI…RRILSNLSES (121 aa)) lines the a nucleoside 3',5'-cyclic phosphate pocket. ANK repeat units lie at residues 559 to 592 (KQEAELTLRVNNAAFYGDMHQLKSLIRAGADPKN), 596 to 625 (DGRSPLHLAACKGFEDVVQFLLHEGVDIDL), 629 to 658 (FGNTPLLEAVKQGHDRVATLLFSKGAKLSL), 660 to 689 (NAGSHLCTAVARGDTDFVRRALAYGGDPNA), 693 to 722 (DHRAPLHIAAAEGLYLMAKLLVDAGASVFA), and 726 to 756 (WGTTPLDEGRRCGSRTMVQLLEAAKSGELSR). In terms of domain architecture, KHA spans 772-858 (RCSVFPHHPW…GDDGGTEARQ (87 aa)).

This sequence belongs to the potassium channel family. Plant (TC 1.A.1.4) subfamily.

Its subcellular location is the membrane. Its function is as follows. Probable outward-rectifying potassium channel. The protein is Potassium channel KOR1 of Oryza sativa subsp. japonica (Rice).